The sequence spans 128 residues: Gastrotropin (128 aa).

At Ala2 the chain carries N-acetylalanine.

The protein belongs to the calycin superfamily. Fatty-acid binding protein (FABP) family. In terms of tissue distribution, expressed in ovary granulosa and luteal cells.

The protein resides in the cytoplasm. Its subcellular location is the membrane. Its function is as follows. Binds to bile acids and is involved in enterohepatic bile acid metabolism. Required for efficient apical to basolateral transport of conjugated bile acids in ileal enterocytes. Stimulates gastric acid and pepsinogen secretion. The protein is Gastrotropin (Fabp6) of Mus musculus (Mouse).